Here is a 132-residue protein sequence, read N- to C-terminus: MADQPQFKWAIAHIFSSFNNTIITVTDLTGAETLAKTSGGMVVKQDRNESSPYAAMQMAMNVAEQIKAKGIQGVHIRVRAPGGNHQRSPGPGAQAAIRSLARAGLRIGRIEDVTPIPHDGTRAPGGKRGRRV.

Positions 113-132 are disordered; that stretch reads VTPIPHDGTRAPGGKRGRRV.

Belongs to the universal ribosomal protein uS11 family. Part of the 30S ribosomal subunit.

Functionally, located on the platform of the 30S subunit. In Methanocella arvoryzae (strain DSM 22066 / NBRC 105507 / MRE50), this protein is Small ribosomal subunit protein uS11.